A 282-amino-acid polypeptide reads, in one-letter code: Shikimate dehydrogenase (NADP(+)) (282 aa).

Shikimate-binding positions include 15–17 and Thr-62; that span reads SKS. Lys-66 serves as the catalytic Proton acceptor. Positions 87 and 103 each coordinate shikimate. NADP(+)-binding positions include 127 to 131, 151 to 156, and Met-220; these read GAGGA and NRTHTK. Tyr-222 lines the shikimate pocket. Gly-244 contributes to the NADP(+) binding site.

This sequence belongs to the shikimate dehydrogenase family. In terms of assembly, homodimer.

The enzyme catalyses shikimate + NADP(+) = 3-dehydroshikimate + NADPH + H(+). It functions in the pathway metabolic intermediate biosynthesis; chorismate biosynthesis; chorismate from D-erythrose 4-phosphate and phosphoenolpyruvate: step 4/7. Involved in the biosynthesis of the chorismate, which leads to the biosynthesis of aromatic amino acids. Catalyzes the reversible NADPH linked reduction of 3-dehydroshikimate (DHSA) to yield shikimate (SA). The sequence is that of Shikimate dehydrogenase (NADP(+)) from Shewanella baltica (strain OS195).